The following is a 200-amino-acid chain: V-type proton ATPase subunit E (200 aa).

Belongs to the V-ATPase E subunit family.

Produces ATP from ADP in the presence of a proton gradient across the membrane. The sequence is that of V-type proton ATPase subunit E from Thermoanaerobacter pseudethanolicus (strain ATCC 33223 / 39E) (Clostridium thermohydrosulfuricum).